Here is a 167-residue protein sequence, read N- to C-terminus: G/U mismatch-specific DNA glycosylase (167 aa).

This sequence belongs to the uracil-DNA glycosylase (UDG) superfamily. TDG/mug family. Binds DNA as a monomer.

It is found in the cytoplasm. It catalyses the reaction Specifically hydrolyzes mismatched double-stranded DNA and polynucleotides, releasing free uracil.. In terms of biological role, excises ethenocytosine and uracil, which can arise by alkylation or deamination of cytosine, respectively, from the corresponding mispairs with guanine in ds-DNA. It is capable of hydrolyzing the carbon-nitrogen bond between the sugar-phosphate backbone of the DNA and the mispaired base. The complementary strand guanine functions in substrate recognition. Required for DNA damage lesion repair in stationary-phase cells. In Pectobacterium carotovorum subsp. carotovorum (strain PC1), this protein is G/U mismatch-specific DNA glycosylase.